We begin with the raw amino-acid sequence, 159 residues long: Putative ribosomal RNA large subunit methyltransferase H (159 aa).

Residues Leu-76, Gly-108, and 127-132 contribute to the S-adenosyl-L-methionine site; that span reads FSKMTF.

This sequence belongs to the RNA methyltransferase RlmH family.

The protein localises to the cytoplasm. The catalysed reaction is pseudouridine(1915) in 23S rRNA + S-adenosyl-L-methionine = N(3)-methylpseudouridine(1915) in 23S rRNA + S-adenosyl-L-homocysteine + H(+). Functionally, specifically methylates the pseudouridine at position 1915 (m3Psi1915) in 23S rRNA. The sequence is that of Putative ribosomal RNA large subunit methyltransferase H from Methanococcus maripaludis (strain DSM 14266 / JCM 13030 / NBRC 101832 / S2 / LL).